Here is a 507-residue protein sequence, read N- to C-terminus: Chromosomal replication initiator protein DnaA (507 aa).

The domain I, interacts with DnaA modulators stretch occupies residues 1 to 112 (MTDDPGSGFT…PATDEADDTT (112 aa)). The disordered stretch occupies residues 99–162 (RIAPPATDEA…ERPRNTDSAT (64 aa)). The span at 113-127 (VPPSENPATTSPDTT) shows a compositional bias: polar residues. The tract at residues 113–166 (VPPSENPATTSPDTTTDNDEIDDSAAARGDNQHSWPSYFTERPRNTDSATAGVT) is domain II. The segment at 167–383 (SLNRRYTFDT…GALIRVTAFA (217 aa)) is domain III, AAA+ region. ATP-binding residues include G211, G213, K214, and T215. Residues 384-507 (SLNKTPIDKA…TTRIRQRSKR (124 aa)) form a domain IV, binds dsDNA region.

The protein belongs to the DnaA family. Oligomerizes as a right-handed, spiral filament on DNA at oriC.

The protein localises to the cytoplasm. Plays an essential role in the initiation and regulation of chromosomal replication. ATP-DnaA binds to the origin of replication (oriC) to initiate formation of the DNA replication initiation complex once per cell cycle. Binds the DnaA box (a 9 base pair repeat at the origin) and separates the double-stranded (ds)DNA. Forms a right-handed helical filament on oriC DNA; dsDNA binds to the exterior of the filament while single-stranded (ss)DNA is stabiized in the filament's interior. The ATP-DnaA-oriC complex binds and stabilizes one strand of the AT-rich DNA unwinding element (DUE), permitting loading of DNA polymerase. After initiation quickly degrades to an ADP-DnaA complex that is not apt for DNA replication. Binds acidic phospholipids. The sequence is that of Chromosomal replication initiator protein DnaA from Mycobacterium bovis (strain BCG / Tokyo 172 / ATCC 35737 / TMC 1019).